Here is a 360-residue protein sequence, read N- to C-terminus: Membrane-bound lytic murein transglycosylase C (360 aa).

The signal sequence occupies residues Met1 to Ser16. The N-palmitoyl cysteine moiety is linked to residue Cys17. Cys17 carries S-diacylglycerol cysteine lipidation.

Belongs to the transglycosylase Slt family.

It is found in the cell outer membrane. The enzyme catalyses Exolytic cleavage of the (1-&gt;4)-beta-glycosidic linkage between N-acetylmuramic acid (MurNAc) and N-acetylglucosamine (GlcNAc) residues in peptidoglycan, from either the reducing or the non-reducing ends of the peptidoglycan chains, with concomitant formation of a 1,6-anhydrobond in the MurNAc residue.. Its function is as follows. Murein-degrading enzyme. May play a role in recycling of muropeptides during cell elongation and/or cell division. The sequence is that of Membrane-bound lytic murein transglycosylase C from Salmonella paratyphi A (strain ATCC 9150 / SARB42).